The sequence spans 493 residues: Cysteine--tRNA ligase (493 aa).

Cys-29 contacts Zn(2+). The 'HIGH' region signature appears at 31–41 (VTVYDLCHLGH). The interval 154–179 (KLSGRDPDDQQQGASGRTADGEESRK) is disordered. Cys-213, His-238, and Glu-242 together coordinate Zn(2+). A 'KMSKS' region motif is present at residues 270-274 (KMSKS). Lys-273 lines the ATP pocket.

Belongs to the class-I aminoacyl-tRNA synthetase family. Monomer. Zn(2+) is required as a cofactor.

Its subcellular location is the cytoplasm. It catalyses the reaction tRNA(Cys) + L-cysteine + ATP = L-cysteinyl-tRNA(Cys) + AMP + diphosphate. The sequence is that of Cysteine--tRNA ligase from Synechococcus sp. (strain CC9605).